The following is an 867-amino-acid chain: Nitrate reductase [NADPH] (867 aa).

Residues 38–58 (DIPLPPPSKEPTEVLSIDKPT) are disordered. Cys152 is a Mo-molybdopterin binding site. Residues 514-589 (NRIIDLQEFK…MPDYHIGTMD (76 aa)) form the Cytochrome b5 heme-binding domain. Heme contacts are provided by His549 and His572. The FAD-binding FR-type domain occupies 615–726 (KSWTKATLVK…KGPTGRFEYL (112 aa)). Residues 669 to 672 (RSYT), 686 to 690 (LVKIY), Phe691, 700 to 702 (KMT), and Thr753 each bind FAD. 837–846 (MVLICGPEAM) lines the NADP(+) pocket.

It belongs to the nitrate reductase family. In terms of assembly, homodimer. Requires FAD as cofactor. The cofactor is heme. It depends on Mo-molybdopterin as a cofactor.

The catalysed reaction is nitrite + NADP(+) + H2O = nitrate + NADPH + H(+). Functionally, nitrate reductase is a key enzyme involved in the first step of nitrate assimilation in plants, fungi and bacteria. This is Nitrate reductase [NADPH] (niaD) from Aspergillus niger.